We begin with the raw amino-acid sequence, 218 residues long: Large ribosomal subunit protein uL3 (218 aa).

Belongs to the universal ribosomal protein uL3 family. In terms of assembly, part of the 50S ribosomal subunit. Forms a cluster with proteins L14 and L19.

Its function is as follows. One of the primary rRNA binding proteins, it binds directly near the 3'-end of the 23S rRNA, where it nucleates assembly of the 50S subunit. This Corynebacterium jeikeium (strain K411) protein is Large ribosomal subunit protein uL3.